Reading from the N-terminus, the 461-residue chain is Cyclic AMP-responsive element-binding protein 3-like protein 3 (461 aa).

At 1 to 322 the chain is on the cytoplasmic side; that stretch reads MNTDLAAGKM…STSKSAQTGT (322 aa). The interval 51–120 is disordered; it reads DQQVLPNPDS…AGCHPAQPGK (70 aa). Over residues 63-85 the composition is skewed to low complexity; the sequence is FLSSILGSGDSLPSSPLWSPEGS. At Ser173 the chain carries Phosphoserine. The 64-residue stretch at 243-306 folds into the bZIP domain; that stretch reads VLKKIRRKIR…LSLLEQLKKL (64 aa). Residues 245-274 are basic motif; sequence KKIRRKIRNKQSAQESRKKKKEYIDGLETR. The tract at residues 285-306 is leucine-zipper; it reads LQRKVLHLEKQNLSLLEQLKKL. Lys294 is covalently cross-linked (Glycyl lysine isopeptide (Lys-Gly) (interchain with G-Cter in ubiquitin)). A helical; Signal-anchor for type II membrane protein transmembrane segment spans residues 323–343; the sequence is CVAVLLLSFALIILPSISPFG. The Lumenal portion of the chain corresponds to 344-461; that stretch reads PNKTESPGDF…AGLEAAGDEL (118 aa). The tract at residues 370–408 is disordered; it reads RVAADAVPGSEAPGPRPEADTTREESPGSPGADWGFQDT. An O-linked (GalNAc...) serine glycan is attached at Ser379. Basic and acidic residues predominate over residues 386-395; sequence PEADTTREES. Residues Asn410, Asn413, Asn420, and Asn427 are each glycosylated (N-linked (GlcNAc...) asparagine). The segment at 442–461 is disordered; the sequence is APGPSTGSGRAGLEAAGDEL.

The protein belongs to the bZIP family. ATF subfamily. Binds DNA as a dimer. May form homodimers. Interacts with ATF6. Interacts with SYNV1/HRD1; this interaction leads to CREB3L3 ubiquitination and proteasomal degradation. Post-translationally, controlled by regulated intramembrane proteolysis (RIP). Following ER stress a fragment containing the cytoplasmic transcription factor domain is released by proteolysis. The cleavage seems to be performed sequentially by site-1 and site-2 proteases (PS1 and PS2). N- and O-glycosylated. N-glycosylation is required for optimal proteolytic activation. O-glycosylated with core 1 or possibly core 8 glycans. In terms of processing, ubiquitinated at Lys-294 by SYNV1/HRD1 via 'Lys-27'-linked ubiquitin. As to expression, exclusively expressed in liver. Underexpressed in hepatocellular carcinoma tissues.

Its subcellular location is the endoplasmic reticulum membrane. It is found in the nucleus. In terms of biological role, transcription factor that may act during endoplasmic reticulum stress by activating unfolded protein response target genes. Activated in response to cAMP stimulation. In vitro, binds to the cAMP response element (CRE) and box-B element. Activates transcription through box-B element. Activates transcription through CRE. May function synergistically with ATF6. In acute inflammatory response, may activate expression of acute phase response (APR) genes. May be involved in growth suppression. Regulates FGF21 transcription. Plays a crucial role in the regulation of triglyceride metabolism and is required for the maintenance of normal plasma triglyceride concentrations. The chain is Cyclic AMP-responsive element-binding protein 3-like protein 3 (CREB3L3) from Homo sapiens (Human).